We begin with the raw amino-acid sequence, 466 residues long: Argininosuccinate lyase (466 aa).

Belongs to the lyase 1 family. Argininosuccinate lyase subfamily.

The protein resides in the cytoplasm. The enzyme catalyses 2-(N(omega)-L-arginino)succinate = fumarate + L-arginine. It functions in the pathway amino-acid biosynthesis; L-arginine biosynthesis; L-arginine from L-ornithine and carbamoyl phosphate: step 3/3. The chain is Argininosuccinate lyase from Synechococcus elongatus (strain ATCC 33912 / PCC 7942 / FACHB-805) (Anacystis nidulans R2).